We begin with the raw amino-acid sequence, 285 residues long: Transcription factor JAMYB (285 aa).

2 consecutive HTH myb-type domains span residues 26-78 and 79-133; these read SAEL…LNYL and RPDV…QKHA. DNA-binding regions (H-T-H motif) lie at residues 54-78 and 106-129; these read WNAL…LNYL and WSKI…RTRV.

Its subcellular location is the nucleus. In terms of biological role, probable transcription factor that may be involved in the jasmonate-dependent defense responses to the rice blast fungus Magnaporthe oryzae. Does not seem to function in the salicylic acid-dependent signaling pathway. This chain is Transcription factor JAMYB, found in Oryza sativa subsp. japonica (Rice).